We begin with the raw amino-acid sequence, 180 residues long: tRNA (cytidine(56)-2'-O)-methyltransferase (180 aa).

S-adenosyl-L-methionine-binding positions include Leu-84 and 112–116 (GAEKV).

The protein belongs to the aTrm56 family. In terms of assembly, homodimer.

It is found in the cytoplasm. The enzyme catalyses cytidine(56) in tRNA + S-adenosyl-L-methionine = 2'-O-methylcytidine(56) in tRNA + S-adenosyl-L-homocysteine + H(+). Specifically catalyzes the AdoMet-dependent 2'-O-ribose methylation of cytidine at position 56 in tRNAs. The sequence is that of tRNA (cytidine(56)-2'-O)-methyltransferase from Natronomonas pharaonis (strain ATCC 35678 / DSM 2160 / CIP 103997 / JCM 8858 / NBRC 14720 / NCIMB 2260 / Gabara) (Halobacterium pharaonis).